Consider the following 215-residue polypeptide: Cytidylate kinase (215 aa).

11 to 19 contacts ATP; the sequence is GPTASGKGT.

It belongs to the cytidylate kinase family. Type 1 subfamily.

It localises to the cytoplasm. The catalysed reaction is CMP + ATP = CDP + ADP. The enzyme catalyses dCMP + ATP = dCDP + ADP. The chain is Cytidylate kinase from Polynucleobacter necessarius subsp. necessarius (strain STIR1).